Consider the following 3843-residue polypeptide: NBPF family member NBPF19 (3843 aa).

Residues 70–130 are a coiled coil; it reads MLRNERQFKE…RSLNEHLQAL (61 aa). Olduvai domains lie at 165–257, 258–329, 330–421, 424–479, 480–572, 573–665, 668–723, 724–816, 817–909, 912–967, 968–1060, 1061–1153, 1156–1211, 1212–1304, 1305–1397, 1400–1455, 1456–1548, 1549–1641, 1644–1699, 1700–1792, 1793–1885, 1888–1943, 1944–2036, 2037–2129, 2132–2187, 2188–2280, 2281–2373, 2376–2431, 2432–2524, 2525–2617, 2620–2675, 2676–2768, 2769–2861, 2864–2919, 2920–3012, 3013–3105, 3108–3163, 3164–3256, 3257–3349, 3352–3407, 3408–3500, 3501–3593, 3596–3651, 3652–3744, and 3745–3843; these read ENDN…HIIP, ENES…VDIG, RHRW…PSCP, SREL…LDVD, RIKK…RSKK, ERRR…PSCP, and ERRR…IFPQ. Disordered stretches follow at residues 180–203 and 249–295; these read EKVQ…PEDS and WEDA…EGYS. 2 stretches are compositionally biased toward acidic residues: residues 259–268 and 279–291; these read NESDDEEEEE and ESEE…ESWD. The tract at residues 559–597 is disordered; sequence KGKGKKRRGRRSKKERRRGRKEGEEDQNPPCPRLSRELL. Basic residues predominate over residues 560-578; sequence GKGKKRRGRRSKKERRRGR. Positions 803–841 are disordered; that stretch reads KGKGKKRRGRRSKKERRRGRKEGEEDQNPPCPRLSRELL. The segment covering 804–822 has biased composition (basic residues); sequence GKGKKRRGRRSKKERRRGR. The tract at residues 1047-1085 is disordered; it reads KGKGKKRRGRRSKKERRRGRKEGEEDQNPPCPRLSRELL. Basic residues predominate over residues 1048–1066; sequence GKGKKRRGRRSKKERRRGR. The tract at residues 1291–1329 is disordered; that stretch reads KGKGKKRRGRRSKKERRRGRKEGEEDQNPPCPRLSRELL. Positions 1292 to 1310 are enriched in basic residues; that stretch reads GKGKKRRGRRSKKERRRGR. The segment at 1535 to 1573 is disordered; sequence KGKGKKRRGRRSKKERRRGRKEGEEDQNPPCPRLSRELL. The span at 1536-1554 shows a compositional bias: basic residues; the sequence is GKGKKRRGRRSKKERRRGR. The tract at residues 1779 to 1817 is disordered; sequence KGKGKKRRGRRSKKERRRGRKEGEEDQNPPCPRLSRELL. Basic residues predominate over residues 1780–1798; it reads GKGKKRRGRRSKKERRRGR. Residues 2023 to 2061 are disordered; the sequence is KGKGKKRRGRRSKKERRRGRKEGEEDQNPPCPRLSRELL. Positions 2024-2042 are enriched in basic residues; that stretch reads GKGKKRRGRRSKKERRRGR. Positions 2267–2305 are disordered; that stretch reads KGKGKKRRGRRSKKERRRGRKEGEEDQNPPCPRLSRELL. Positions 2268–2286 are enriched in basic residues; the sequence is GKGKKRRGRRSKKERRRGR. The tract at residues 2511-2549 is disordered; the sequence is KGKGKKRRGRRSKKERRRGRKEGEEDQNPPCPRLSRELL. Positions 2512-2530 are enriched in basic residues; the sequence is GKGKKRRGRRSKKERRRGR. The disordered stretch occupies residues 2755 to 2793; sequence KGKGKKRRGRRSKKERRRGRKEGEEDQNPPCPRLSRELL. Basic residues predominate over residues 2756–2774; it reads GKGKKRRGRRSKKERRRGR. The segment at 2999–3037 is disordered; the sequence is KGKGKKRRGRRSKKERRRGRKEGEEDQNPPCPRLSRELL. The segment covering 3000–3018 has biased composition (basic residues); the sequence is GKGKKRRGRRSKKERRRGR. Residues 3243–3281 form a disordered region; that stretch reads KGKGKKRRGRRSKKERRRGRKEGEEDQNPPCPRLSRELL. The segment covering 3244 to 3262 has biased composition (basic residues); it reads GKGKKRRGRRSKKERRRGR. Residues 3487–3525 form a disordered region; the sequence is KGKGKKRRGRRSKKERRRGRKEGEEDQNPPCPRLSRELL. A compositionally biased stretch (basic residues) spans 3488 to 3506; that stretch reads GKGKKRRGRRSKKERRRGR. The disordered stretch occupies residues 3731–3764; the sequence is KGKGKKRRGRRSKKERRRGRKEGEEDQNPPCPRL. Positions 3732–3750 are enriched in basic residues; sequence GKGKKRRGRRSKKERRRGR.

It belongs to the NBPF family.

It is found in the cytoplasm. This Homo sapiens (Human) protein is NBPF family member NBPF19.